Here is a 112-residue protein sequence, read N- to C-terminus: Cell cycle protein GpsB (112 aa).

Positions 42-77 (YQKMADMNNEVVKLSEENNKLKKEVEELRLRVATSR) form a coiled coil. Residues 75–97 (TSRPSDNKSFSSNNSSSSNNNVD) form a disordered region. Low complexity predominate over residues 81 to 95 (NKSFSSNNSSSSNNN).

This sequence belongs to the GpsB family. In terms of assembly, forms polymers through the coiled coil domains. Interacts with PBP1, MreC and EzrA.

It is found in the cytoplasm. In terms of biological role, divisome component that associates with the complex late in its assembly, after the Z-ring is formed, and is dependent on DivIC and PBP2B for its recruitment to the divisome. Together with EzrA, is a key component of the system that regulates PBP1 localization during cell cycle progression. Its main role could be the removal of PBP1 from the cell pole after pole maturation is completed. Also contributes to the recruitment of PBP1 to the division complex. Not essential for septum formation. The polypeptide is Cell cycle protein GpsB (Staphylococcus haemolyticus (strain JCSC1435)).